Reading from the N-terminus, the 318-residue chain is Transaldolase (318 aa).

The active-site Schiff-base intermediate with substrate is Lys-126.

The protein belongs to the transaldolase family. Type 1 subfamily. Homodimer.

Its subcellular location is the cytoplasm. It carries out the reaction D-sedoheptulose 7-phosphate + D-glyceraldehyde 3-phosphate = D-erythrose 4-phosphate + beta-D-fructose 6-phosphate. It participates in carbohydrate degradation; pentose phosphate pathway; D-glyceraldehyde 3-phosphate and beta-D-fructose 6-phosphate from D-ribose 5-phosphate and D-xylulose 5-phosphate (non-oxidative stage): step 2/3. Functionally, transaldolase is important for the balance of metabolites in the pentose-phosphate pathway. The chain is Transaldolase from Variovorax paradoxus (strain S110).